Here is an 821-residue protein sequence, read N- to C-terminus: Probable phosphoenolpyruvate synthase (821 aa).

The active-site Tele-phosphohistidine intermediate is histidine 444. Arginine 543, arginine 590, glutamate 687, glycine 709, threonine 710, asparagine 711, and aspartate 712 together coordinate substrate. Glutamate 687 is a Mg(2+) binding site. Residue aspartate 712 coordinates Mg(2+). Cysteine 759 functions as the Proton donor in the catalytic mechanism.

It belongs to the PEP-utilizing enzyme family. Requires Mg(2+) as cofactor.

It carries out the reaction pyruvate + ATP + H2O = phosphoenolpyruvate + AMP + phosphate + 2 H(+). It functions in the pathway carbohydrate biosynthesis; gluconeogenesis. Its function is as follows. Catalyzes the phosphorylation of pyruvate to phosphoenolpyruvate. The sequence is that of Probable phosphoenolpyruvate synthase (ppsA) from Pyrococcus horikoshii (strain ATCC 700860 / DSM 12428 / JCM 9974 / NBRC 100139 / OT-3).